Reading from the N-terminus, the 521-residue chain is Sphingolipid C9-methyltransferase 2 (521 aa).

Transmembrane regions (helical) follow at residues 60-80 (VLIS…GGGF) and 85-105 (FFAI…ISAI). Residues 225 to 226 (YT), 262 to 270 (MLDIGCGWG), 288 to 293 (TLGRNQ), and 318 to 319 (YR) each bind S-adenosyl-L-methionine.

The protein belongs to the CFA/CMAS family.

It localises to the membrane. The catalysed reaction is a (4E,8E)-4-sphinga-4,8-dienine ceramide + S-adenosyl-L-methionine = a 9-methyl-(4E,8E)-sphinga-4,8-dienine ceramide + S-adenosyl-L-homocysteine + H(+). Its pathway is lipid metabolism; sphingolipid metabolism. In terms of biological role, catalyzes methylation of the sphingoid base component of glucosylceramides (GluCers) at the C9-position. Sphingolipid C9-methylation requires 4,8-desaturated ceramides as substrates. Glucosylceramides play important roles in growth, differentiation and pathogenicity. The methyl group at the C9-position distinguishes fungal glucosylceramides from those of plants and animals and may thus play a role in host-pathogen interactions enabling the host to recognize the fungal attack and initiate specific defense responses. However, C-9 methylation of GlcCers is not essential for the sensitivity of F.graminearum to plant defensins MsDef1 and RsAFP2. The sequence is that of Sphingolipid C9-methyltransferase 2 from Gibberella zeae (strain ATCC MYA-4620 / CBS 123657 / FGSC 9075 / NRRL 31084 / PH-1) (Wheat head blight fungus).